The following is a 295-amino-acid chain: Phosphoribosylaminoimidazole-succinocarboxamide synthase (295 aa).

It belongs to the SAICAR synthetase family.

It carries out the reaction 5-amino-1-(5-phospho-D-ribosyl)imidazole-4-carboxylate + L-aspartate + ATP = (2S)-2-[5-amino-1-(5-phospho-beta-D-ribosyl)imidazole-4-carboxamido]succinate + ADP + phosphate + 2 H(+). The protein operates within purine metabolism; IMP biosynthesis via de novo pathway; 5-amino-1-(5-phospho-D-ribosyl)imidazole-4-carboxamide from 5-amino-1-(5-phospho-D-ribosyl)imidazole-4-carboxylate: step 1/2. In Desulforapulum autotrophicum (strain ATCC 43914 / DSM 3382 / VKM B-1955 / HRM2) (Desulfobacterium autotrophicum), this protein is Phosphoribosylaminoimidazole-succinocarboxamide synthase.